Consider the following 534-residue polypeptide: MPNVFQNLVSCKRVFRELKMAAYNGGTSAAAAGHHHHHHHHLPHLPPPHLHHHHHPQHHLHPGSAAAVHPVQQHTSSAAAAAAAAAAAAAMLNPGQQQPYFPSPAPGQAPGPAAAAPAQVQAAAAATVKAHHHQHSHHPQQQLDIEPDRPIGYGAFGVVWSVTDPRDGKRVALKKMPNVFQNLVSCKRVFRELKMLCFFKHDNVLSALDILQPPHIDYFEEIYVVTELMQSDLHKIIVSPQPLSSDHVKVFLYQILRGLKYLHSAGILHRDIKPGNLLVNSNCVLKICDFGLARVEELDESRHMTQEVVTQYYRAPEILMGSRHYSNAIDIWSVGCIFAELLGRRILFQAQSPIQQLDLITDLLGTPSLEAMRTACEGAKAHILRGPHKQPSLPVLYTLSSQATHEAVHLLCRMLVFDPSKRISAKDALAHPYLDEGRLRYHTCMCKCCFSTSTGRVYTSDFEPVTNPKFDDTFEKNLSSVRQVKEIIHQFILEQQKGNRVPLCINPQSAAFKSFISSTVAQPSEMPPSPLVWE.

2 sufficient for interaction with DAPK3 regions span residues 8–132 (LVSC…KAHH) and 131–423 (HHHQ…SKRI). Required for interaction with TAB2 stretches follow at residues 8-311 (LVSC…VVTQ) and 441-534 (YHTC…LVWE). Disordered regions lie at residues 29 to 79 (AAAA…SSAA) and 97 to 147 (QQPY…DIEP). Residues 33–61 (GHHHHHHHHLPHLPPPHLHHHHHPQHHLH) are compositionally biased toward basic residues. Residues 110 to 126 (PGPAAAAPAQVQAAAAA) are compositionally biased toward low complexity. Basic residues predominate over residues 129-138 (KAHHHQHSHH). The 290-residue stretch at 145–434 (IEPDRPIGYG…AKDALAHPYL (290 aa)) folds into the Protein kinase domain. Residues 151 to 159 (IGYGAFGVV) and Lys-174 each bind ATP. Asp-271 functions as the Proton acceptor in the catalytic mechanism. Thr-305 carries the post-translational modification Phosphothreonine; by autocatalysis. The TQE motif lies at 305–307 (TQE). The interval 435-534 (DEGRLRYHTC…EMPPSPLVWE (100 aa)) is required for homodimerization and kinase activation and localization to the nucleus. Residue Ser-529 is modified to Phosphoserine.

This sequence belongs to the protein kinase superfamily. CMGC Ser/Thr protein kinase family. MAP kinase subfamily. Homodimer. Homodimerization is required for intermolecular autophosphorylation, kinase activation and nuclear localization. May interact with components of cullin-RING-based SCF (SKP1-CUL1-F-box protein) E3 ubiquitin-protein ligase complexes. Interacts with LEF1, MEF2A, MYBL1 and MYBL2. Interacts with the upstream activating kinases HIPK2 and MAP3K7/TAK1. Interaction with MAP3K7/TAK1 seems to be indirect, and may be mediated by other proteins such as STAT3, TAB1 and TAB2. Interacts with and phosphorylates a number of transcription factors including FOXO1, FOXO3, FOXO4, MYB, NOTCH1 and TCF7L2/TCF4. Interacts with DAPK3/ZIPK, and this interaction may disrupt interaction with transcription factors such as TCF7L2/TCF4. Forms a transcriptional repressor complex with CHD7, PPARG and SETDB1. Interacts with RNF138/NARF. Interacts with ATF5; the interaction stabilizes ATF5 at the protein level in a kinase-independent manner. The cofactor is Mg(2+). In terms of processing, phosphorylated on Thr-305. Intermolecular autophosphorylation on Thr-305 activates the enzyme.

It localises to the nucleus. The protein localises to the cytoplasm. It catalyses the reaction L-seryl-[protein] + ATP = O-phospho-L-seryl-[protein] + ADP + H(+). The enzyme catalyses L-threonyl-[protein] + ATP = O-phospho-L-threonyl-[protein] + ADP + H(+). Its activity is regulated as follows. Activated by the non-canonical Wnt signaling pathway, in which WNT5A leads to activation of MAP3K7/TAK1 and HIPK2, which subsequently phosphorylates and activates this protein. Activated by dimerization and subsequent intermolecular autophosphorylation on Thr-305. Other cytokines such as IL6 may also activate this regulatory circuit. Serine/threonine-protein kinase that regulates a number of transcription factors with key roles in cell fate determination. Positive effector of the non-canonical Wnt signaling pathway, acting downstream of WNT5A, MAP3K7/TAK1 and HIPK2. Negative regulator of the canonical Wnt/beta-catenin signaling pathway. Binds to and phosphorylates TCF7L2/TCF4 and LEF1, promoting the dissociation of the TCF7L2/LEF1/beta-catenin complex from DNA, as well as the ubiquitination and subsequent proteolysis of LEF1. Together these effects inhibit the transcriptional activation of canonical Wnt/beta-catenin target genes. Negative regulator of the Notch signaling pathway. Binds to and phosphorylates NOTCH1, thereby preventing the formation of a transcriptionally active ternary complex of NOTCH1, RBPJ/RBPSUH and MAML1. Negative regulator of the MYB family of transcription factors. Phosphorylation of MYB leads to its subsequent proteolysis while phosphorylation of MYBL1 and MYBL2 inhibits their interaction with the coactivator CREBBP. Other transcription factors may also be inhibited by direct phosphorylation of CREBBP itself. Acts downstream of IL6 and MAP3K7/TAK1 to phosphorylate STAT3, which is in turn required for activation of NLK by MAP3K7/TAK1. Upon IL1B stimulus, cooperates with ATF5 to activate the transactivation activity of C/EBP subfamily members. Phosphorylates ATF5 but also stabilizes ATF5 protein levels in a kinase-independent manner. Acts as an inhibitor of the mTORC1 complex in response to osmotic stress by mediating phosphorylation of RPTOR, thereby preventing recruitment of the mTORC1 complex to lysosomes. The sequence is that of Serine/threonine-protein kinase NLK (NLK) from Bos taurus (Bovine).